Reading from the N-terminus, the 147-residue chain is MRSLLILVLCFLPLAALGKVYGRCELAAAMKRLGLDNYRGYSLGNWVCAAKFESNFNTHATNRNTDGSTDYGILQINSRWWCNDGRTPGSKNLCNIPCSALLSSDITASVNCAKKIASGGNGMNAWVAWRNRCKGTDVHAWIRGCRL.

Positions 1 to 18 (MRSLLILVLCFLPLAALG) are cleaved as a signal peptide. The C-type lysozyme domain maps to 19-147 (KVYGRCELAA…VHAWIRGCRL (129 aa)). 4 disulfides stabilise this stretch: cysteine 24/cysteine 145, cysteine 48/cysteine 133, cysteine 82/cysteine 98, and cysteine 94/cysteine 112.

Belongs to the glycosyl hydrolase 22 family. As to quaternary structure, monomer.

The protein localises to the secreted. The enzyme catalyses Hydrolysis of (1-&gt;4)-beta-linkages between N-acetylmuramic acid and N-acetyl-D-glucosamine residues in a peptidoglycan and between N-acetyl-D-glucosamine residues in chitodextrins.. In terms of biological role, lysozymes have primarily a bacteriolytic function; those in tissues and body fluids are associated with the monocyte-macrophage system and enhance the activity of immunoagents. The polypeptide is Lysozyme C (LYZ) (Meleagris gallopavo (Wild turkey)).